We begin with the raw amino-acid sequence, 251 residues long: Vitamin B12 import ATP-binding protein BtuD (251 aa).

One can recognise an ABC transporter domain in the interval 2-236; sequence IRVNSLQVDS…EVLQSVFGTS (235 aa). Residue 30–37 coordinates ATP; sequence GPNGCGKS.

This sequence belongs to the ABC transporter superfamily. Vitamin B12 importer (TC 3.A.1.13.1) family. In terms of assembly, the complex is composed of two ATP-binding proteins (BtuD), two transmembrane proteins (BtuC) and a solute-binding protein (BtuF).

It localises to the cell inner membrane. The enzyme catalyses an R-cob(III)alamin(out) + ATP + H2O = an R-cob(III)alamin(in) + ADP + phosphate + H(+). Functionally, part of the ABC transporter complex BtuCDF involved in vitamin B12 import. Responsible for energy coupling to the transport system. This Vibrio cholerae serotype O1 (strain ATCC 39541 / Classical Ogawa 395 / O395) protein is Vitamin B12 import ATP-binding protein BtuD.